We begin with the raw amino-acid sequence, 129 residues long: Ribosome-binding factor A (129 aa).

Belongs to the RbfA family. Monomer. Binds 30S ribosomal subunits, but not 50S ribosomal subunits or 70S ribosomes.

It is found in the cytoplasm. Its function is as follows. One of several proteins that assist in the late maturation steps of the functional core of the 30S ribosomal subunit. Associates with free 30S ribosomal subunits (but not with 30S subunits that are part of 70S ribosomes or polysomes). Required for efficient processing of 16S rRNA. May interact with the 5'-terminal helix region of 16S rRNA. The chain is Ribosome-binding factor A from Thioalkalivibrio sulfidiphilus (strain HL-EbGR7).